The chain runs to 261 residues: 3-methyl-2-oxobutanoate hydroxymethyltransferase (261 aa).

2 residues coordinate Mg(2+): Asp-44 and Asp-83. 3-methyl-2-oxobutanoate contacts are provided by residues 44-45 (DS), Asp-83, and Lys-112. Mg(2+) is bound at residue Glu-114. Glu-181 functions as the Proton acceptor in the catalytic mechanism.

This sequence belongs to the PanB family. In terms of assembly, homodecamer; pentamer of dimers. It depends on Mg(2+) as a cofactor.

The protein resides in the cytoplasm. It catalyses the reaction 3-methyl-2-oxobutanoate + (6R)-5,10-methylene-5,6,7,8-tetrahydrofolate + H2O = 2-dehydropantoate + (6S)-5,6,7,8-tetrahydrofolate. Its pathway is cofactor biosynthesis; (R)-pantothenate biosynthesis; (R)-pantoate from 3-methyl-2-oxobutanoate: step 1/2. Its function is as follows. Catalyzes the reversible reaction in which hydroxymethyl group from 5,10-methylenetetrahydrofolate is transferred onto alpha-ketoisovalerate to form ketopantoate. The polypeptide is 3-methyl-2-oxobutanoate hydroxymethyltransferase (Acidithiobacillus ferrooxidans (strain ATCC 23270 / DSM 14882 / CIP 104768 / NCIMB 8455) (Ferrobacillus ferrooxidans (strain ATCC 23270))).